Consider the following 308-residue polypeptide: tRNA dimethylallyltransferase (308 aa).

8-15 (GPTGTGKS) lines the ATP pocket. 10–15 (TGTGKS) lines the substrate pocket.

Belongs to the IPP transferase family. Monomer. Mg(2+) is required as a cofactor.

It carries out the reaction adenosine(37) in tRNA + dimethylallyl diphosphate = N(6)-dimethylallyladenosine(37) in tRNA + diphosphate. Functionally, catalyzes the transfer of a dimethylallyl group onto the adenine at position 37 in tRNAs that read codons beginning with uridine, leading to the formation of N6-(dimethylallyl)adenosine (i(6)A). The sequence is that of tRNA dimethylallyltransferase from Mycolicibacterium vanbaalenii (strain DSM 7251 / JCM 13017 / BCRC 16820 / KCTC 9966 / NRRL B-24157 / PYR-1) (Mycobacterium vanbaalenii).